Consider the following 95-residue polypeptide: Co-chaperonin GroES (95 aa).

It belongs to the GroES chaperonin family. As to quaternary structure, heptamer of 7 subunits arranged in a ring. Interacts with the chaperonin GroEL.

It is found in the cytoplasm. Its function is as follows. Together with the chaperonin GroEL, plays an essential role in assisting protein folding. The GroEL-GroES system forms a nano-cage that allows encapsulation of the non-native substrate proteins and provides a physical environment optimized to promote and accelerate protein folding. GroES binds to the apical surface of the GroEL ring, thereby capping the opening of the GroEL channel. The sequence is that of Co-chaperonin GroES from Rickettsia conorii (strain ATCC VR-613 / Malish 7).